We begin with the raw amino-acid sequence, 150 residues long: Mating pheromone 1 (150 aa).

A signal peptide spans 1 to 16 (MKAIFIILAILMVTQA). A propeptide spanning residues 17-52 (FKMTSKVNTKLQSQIQSKFQSKNKLASTFQTSSKLK) is cleaved from the precursor.

It localises to the secreted. Functionally, mating ciliate pheromones (or gamones) are diffusible extracellular communication signals that distinguish different intraspecific classes of cells commonly referred to as 'mating types'. They prepare the latter for conjugation by changing their cell surface properties. In Euplotoides octocarinatus (Freshwater ciliate), this protein is Mating pheromone 1.